The sequence spans 160 residues: Vesicle transport protein SFT2B (160 aa).

The residue at position 1 (methionine 1) is an N-acetylmethionine. Over 1–36 the chain is Cytoplasmic; the sequence is MDKLKKVLSGQDTEDRSGLSEVVEASSLSWSTRIKG. Serine 9 is modified (phosphoserine). Residues 37–57 traverse the membrane as a helical segment; it reads FIACFAIGILCSLLGTVLLWV. Residues 58–63 are Lumenal-facing; the sequence is PRKGLH. A helical transmembrane segment spans residues 64–84; it reads LFAVFYTFGNIASIGSTIFLM. The Cytoplasmic portion of the chain corresponds to 85-98; that stretch reads GPVKQLKRMFEPTR. Residues 99–119 traverse the membrane as a helical segment; it reads LIATIMVLLCFALTLCSAFWW. Residues 120–123 are Lumenal-facing; the sequence is HNKG. Residues 124-144 form a helical membrane-spanning segment; that stretch reads LALIFCILQSLALTWYSLSFI. Residues 145–160 are Cytoplasmic-facing; that stretch reads PFARDAVKKCFAVCLA.

Belongs to the SFT2 family.

It localises to the membrane. Functionally, may be involved in fusion of retrograde transport vesicles derived from an endocytic compartment with the Golgi complex. This Homo sapiens (Human) protein is Vesicle transport protein SFT2B.